Consider the following 283-residue polypeptide: Bifunctional protein FolD (283 aa).

NADP(+) is bound by residues 159-161 (GRS), S184, and I225.

This sequence belongs to the tetrahydrofolate dehydrogenase/cyclohydrolase family. In terms of assembly, homodimer.

The catalysed reaction is (6R)-5,10-methylene-5,6,7,8-tetrahydrofolate + NADP(+) = (6R)-5,10-methenyltetrahydrofolate + NADPH. The enzyme catalyses (6R)-5,10-methenyltetrahydrofolate + H2O = (6R)-10-formyltetrahydrofolate + H(+). Its pathway is one-carbon metabolism; tetrahydrofolate interconversion. Functionally, catalyzes the oxidation of 5,10-methylenetetrahydrofolate to 5,10-methenyltetrahydrofolate and then the hydrolysis of 5,10-methenyltetrahydrofolate to 10-formyltetrahydrofolate. The protein is Bifunctional protein FolD of Methanoculleus marisnigri (strain ATCC 35101 / DSM 1498 / JR1).